The sequence spans 556 residues: ATP synthase subunit alpha 2 (556 aa).

177 to 184 (GDRATGKT) lines the ATP pocket. Residues 514-556 (GGHAEDAADDMGGALDGEHASGDATSIAPTPPGGAEAGAPRKR) form a disordered region. Positions 546 to 556 (GGAEAGAPRKR) are enriched in low complexity.

The protein belongs to the ATPase alpha/beta chains family. In terms of assembly, F-type ATPases have 2 components, CF(1) - the catalytic core - and CF(0) - the membrane proton channel. CF(1) has five subunits: alpha(3), beta(3), gamma(1), delta(1), epsilon(1). CF(0) has three main subunits: a(1), b(2) and c(9-12). The alpha and beta chains form an alternating ring which encloses part of the gamma chain. CF(1) is attached to CF(0) by a central stalk formed by the gamma and epsilon chains, while a peripheral stalk is formed by the delta and b chains.

Its subcellular location is the cell inner membrane. The enzyme catalyses ATP + H2O + 4 H(+)(in) = ADP + phosphate + 5 H(+)(out). In terms of biological role, produces ATP from ADP in the presence of a proton gradient across the membrane. The alpha chain is a regulatory subunit. The chain is ATP synthase subunit alpha 2 from Burkholderia thailandensis (strain ATCC 700388 / DSM 13276 / CCUG 48851 / CIP 106301 / E264).